The sequence spans 291 residues: Porphobilinogen deaminase (291 aa).

C237 is modified (S-(dipyrrolylmethanemethyl)cysteine).

It belongs to the HMBS family. Monomer. Dipyrromethane is required as a cofactor.

The enzyme catalyses 4 porphobilinogen + H2O = hydroxymethylbilane + 4 NH4(+). Its pathway is porphyrin-containing compound metabolism; protoporphyrin-IX biosynthesis; coproporphyrinogen-III from 5-aminolevulinate: step 2/4. In terms of biological role, tetrapolymerization of the monopyrrole PBG into the hydroxymethylbilane pre-uroporphyrinogen in several discrete steps. The protein is Porphobilinogen deaminase of Clostridium perfringens (strain ATCC 13124 / DSM 756 / JCM 1290 / NCIMB 6125 / NCTC 8237 / Type A).